Consider the following 586-residue polypeptide: MSVHQIRKHAVLPPIICRSDKEFLESVQRYIITETERLGCSEEGPADEYYIIYRNVFDKVIEHITAYKSILTSIKKEYDAFIETIKKDRRTTFCLHGKLKGLAAEPTALVYYRKRTIQLEAKMRIIESNSSKIQSQIDHIKQCRAEYDTKEVKYCTFSKDPSKPIPGMTLQESMNLDALTKYMKHLEDKYAEIKQAMLIKYVPAQRKADLDEEMIVLLKRRDVAENLNKKLQFCHQRLQIISQALSSWVKSDMSSPFQDFVEQIQKTKYLQGDQGIVEELMEDDPRRAKEAEIMLHYIERFNELISLGEYEKAACYAANSPRRILRNIGTMNTFKAVGKIRGKPLPLLLFFEALFITSHAFPCPVDAALTLEGIKCGLSEKRLDLVTNWVTQERLTFSEEAGDVICDYGEQDTYNKAKCLALAQIVYSECGLHKKAILCLCKQGQTHRVMEYIQQLKDFTTDDLLQLLMSCPQVELIQCLTKELNEKQPSLSFGLAILHLFSADMKKVGIKLLQEINKGGIDAVESLMINDSFCSIEKWQEVANICSQNGFDKLSNDITSILRSQAAVTEISEEDDAVNLMEHVFW.

Residues 174-232 adopt a coiled-coil conformation; sequence MNLDALTKYMKHLEDKYAEIKQAMLIKYVPAQRKADLDEEMIVLLKRRDVAENLNKKLQ.

The polypeptide is Clathrin heavy chain linker domain-containing protein 1 (CLHC1) (Homo sapiens (Human)).